The sequence spans 393 residues: Flap endonuclease 1 (393 aa).

The segment at 1–108 (MGILGLSKLL…SELQERRQRA (108 aa)) is N-domain. A Mg(2+)-binding site is contributed by Asp34. Arg74 is a binding site for DNA. Mg(2+)-binding residues include Asp90, Glu162, Glu164, Asp183, and Asp185. The tract at residues 126-257 (LMEKMSKRTV…QKAWEGIKKH (132 aa)) is I-domain. DNA is bound at residue Glu162. Residues Gly235 and Asp237 each coordinate DNA. Position 237 (Asp237) interacts with Mg(2+). Positions 340–348 (TQGRLDQFF) are interaction with PCNA.

It belongs to the XPG/RAD2 endonuclease family. FEN1 subfamily. Interacts with PCNA. Three molecules of FEN1 bind to one PCNA trimer with each molecule binding to one PCNA monomer. PCNA stimulates the nuclease activity without altering cleavage specificity. Requires Mg(2+) as cofactor. Post-translationally, phosphorylated. Phosphorylation upon DNA damage induces relocalization to the nuclear plasma.

Its subcellular location is the nucleus. The protein localises to the nucleolus. It localises to the nucleoplasm. It is found in the mitochondrion. Structure-specific nuclease with 5'-flap endonuclease and 5'-3' exonuclease activities involved in DNA replication and repair. During DNA replication, cleaves the 5'-overhanging flap structure that is generated by displacement synthesis when DNA polymerase encounters the 5'-end of a downstream Okazaki fragment. It enters the flap from the 5'-end and then tracks to cleave the flap base, leaving a nick for ligation. Also involved in the long patch base excision repair (LP-BER) pathway, by cleaving within the apurinic/apyrimidinic (AP) site-terminated flap. Acts as a genome stabilization factor that prevents flaps from equilibrating into structures that lead to duplications and deletions. Also possesses 5'-3' exonuclease activity on nicked or gapped double-stranded DNA, and exhibits RNase H activity. Also involved in replication and repair of rDNA and in repairing mitochondrial DNA. The protein is Flap endonuclease 1 of Trypanosoma cruzi (strain CL Brener).